We begin with the raw amino-acid sequence, 276 residues long: Pantothenate synthetase (276 aa).

25–32 (MGYLHRGH) serves as a coordination point for ATP. His32 serves as the catalytic Proton donor. Gln56 contacts (R)-pantoate. Gln56 is a binding site for beta-alanine. An ATP-binding site is contributed by 143–146 (GEKD). Gln149 contributes to the (R)-pantoate binding site. ATP is bound by residues Val172 and 180-183 (LSSR).

The protein belongs to the pantothenate synthetase family. Homodimer.

It is found in the cytoplasm. The enzyme catalyses (R)-pantoate + beta-alanine + ATP = (R)-pantothenate + AMP + diphosphate + H(+). It functions in the pathway cofactor biosynthesis; (R)-pantothenate biosynthesis; (R)-pantothenate from (R)-pantoate and beta-alanine: step 1/1. In terms of biological role, catalyzes the condensation of pantoate with beta-alanine in an ATP-dependent reaction via a pantoyl-adenylate intermediate. The protein is Pantothenate synthetase of Thermus thermophilus (strain ATCC BAA-163 / DSM 7039 / HB27).